Consider the following 69-residue polypeptide: uncharacterized protein (69 aa).

A helical transmembrane segment spans residues 32–54; it reads MLGAIDVAVAVASVPTLFVVTAI.

The protein resides in the membrane. This is an uncharacterized protein from Sinorhizobium fredii (strain NBRC 101917 / NGR234).